The sequence spans 468 residues: Phenylalanine--tRNA ligase alpha subunit (468 aa).

L-phenylalanine is bound by residues T311, 350-352 (QLD), and F390. A Mg(2+)-binding site is contributed by E392.

Belongs to the class-II aminoacyl-tRNA synthetase family. Phe-tRNA synthetase alpha subunit type 2 subfamily. Tetramer of two alpha and two beta subunits. Mg(2+) serves as cofactor.

It localises to the cytoplasm. It catalyses the reaction tRNA(Phe) + L-phenylalanine + ATP = L-phenylalanyl-tRNA(Phe) + AMP + diphosphate + H(+). The polypeptide is Phenylalanine--tRNA ligase alpha subunit (Saccharolobus solfataricus (strain ATCC 35092 / DSM 1617 / JCM 11322 / P2) (Sulfolobus solfataricus)).